The chain runs to 399 residues: Methylthioribose kinase (399 aa).

ATP contacts are provided by residues Asn-40, Lys-57, and 111 to 113 (EDL). A substrate-binding site is contributed by Asp-229. 246 to 248 (DAE) lines the ATP pocket. Arg-344 serves as a coordination point for substrate.

It belongs to the methylthioribose kinase family. As to quaternary structure, homodimer.

The enzyme catalyses 5-(methylsulfanyl)-D-ribose + ATP = 5-(methylsulfanyl)-alpha-D-ribose 1-phosphate + ADP + H(+). It functions in the pathway amino-acid biosynthesis; L-methionine biosynthesis via salvage pathway; S-methyl-5-thio-alpha-D-ribose 1-phosphate from S-methyl-5'-thioadenosine (hydrolase route): step 2/2. Its function is as follows. Catalyzes the phosphorylation of methylthioribose into methylthioribose-1-phosphate. The sequence is that of Methylthioribose kinase from Klebsiella pneumoniae (strain 342).